Reading from the N-terminus, the 453-residue chain is Ribosomal protein uS12 methylthiotransferase RimO (453 aa).

Residues 5–120 enclose the MTTase N-terminal domain; that stretch reads PKVGFVSLGC…VMQAVHSHLP (116 aa). Positions 14, 50, 79, 151, 155, and 158 each coordinate [4Fe-4S] cluster. The region spanning 137 to 382 is the Radical SAM core domain; it reads LTPRHYAYLK…MEVAEEVSAQ (246 aa). The 69-residue stretch at 385-453 folds into the TRAM domain; that stretch reads QRKVGKTLKV…ADGHDLWGEV (69 aa).

It belongs to the methylthiotransferase family. RimO subfamily. [4Fe-4S] cluster serves as cofactor.

The protein localises to the cytoplasm. It carries out the reaction L-aspartate(89)-[ribosomal protein uS12]-hydrogen + (sulfur carrier)-SH + AH2 + 2 S-adenosyl-L-methionine = 3-methylsulfanyl-L-aspartate(89)-[ribosomal protein uS12]-hydrogen + (sulfur carrier)-H + 5'-deoxyadenosine + L-methionine + A + S-adenosyl-L-homocysteine + 2 H(+). In terms of biological role, catalyzes the methylthiolation of an aspartic acid residue of ribosomal protein uS12. This is Ribosomal protein uS12 methylthiotransferase RimO from Burkholderia ambifaria (strain ATCC BAA-244 / DSM 16087 / CCUG 44356 / LMG 19182 / AMMD) (Burkholderia cepacia (strain AMMD)).